Consider the following 182-residue polypeptide: LPS-assembly lipoprotein LptE (182 aa).

An N-terminal signal peptide occupies residues 1–19 (MRHRILTLLLGLAVLVTAG). Cys-20 is lipidated: N-palmitoyl cysteine. Cys-20 carries the S-diacylglycerol cysteine lipid modification.

The protein belongs to the LptE lipoprotein family. Component of the lipopolysaccharide transport and assembly complex. Interacts with LptD.

Its subcellular location is the cell outer membrane. Together with LptD, is involved in the assembly of lipopolysaccharide (LPS) at the surface of the outer membrane. Required for the proper assembly of LptD. Binds LPS and may serve as the LPS recognition site at the outer membrane. In Photorhabdus laumondii subsp. laumondii (strain DSM 15139 / CIP 105565 / TT01) (Photorhabdus luminescens subsp. laumondii), this protein is LPS-assembly lipoprotein LptE.